A 672-amino-acid chain; its full sequence is Probable copper-transporting P-type ATPase B (672 aa).

A compositionally biased stretch (basic and acidic residues) spans 1-17; that stretch reads MEHHSHQEHENHTSHGN. The tract at residues 1–22 is disordered; that stretch reads MEHHSHQEHENHTSHGNHEHHH. 6 helical membrane passes run 30 to 50, 55 to 75, 93 to 113, 125 to 145, 282 to 302, and 313 to 333; these read FFIS…MGVK, ISFT…FFYG, GMMT…LYAF, TMDF…GHWI, GYLF…WMLI, and LVTV…PLVT. Catalysis depends on Asp-365, which acts as the 4-aspartylphosphate intermediate. Mg(2+) is bound by residues Asp-563 and Asp-567. 2 helical membrane passes run 621–643 and 647–669; these read LWWG…ASIG and SPAV…AFTL.

This sequence belongs to the cation transport ATPase (P-type) (TC 3.A.3) family. Type IB subfamily.

Its subcellular location is the cell membrane. The enzyme catalyses Cu(+)(in) + ATP + H2O = Cu(+)(out) + ADP + phosphate + H(+). Its function is as follows. Involved in copper transport. This Staphylococcus aureus protein is Probable copper-transporting P-type ATPase B (copB).